The following is a 128-amino-acid chain: Large ribosomal subunit protein bL17 (128 aa).

The protein belongs to the bacterial ribosomal protein bL17 family. In terms of assembly, part of the 50S ribosomal subunit. Contacts protein L32.

The polypeptide is Large ribosomal subunit protein bL17 (Streptococcus equi subsp. zooepidemicus (strain H70)).